Consider the following 156-residue polypeptide: Small ribosomal subunit protein uS7 (156 aa).

This sequence belongs to the universal ribosomal protein uS7 family. As to quaternary structure, part of the 30S ribosomal subunit. Contacts proteins S9 and S11.

One of the primary rRNA binding proteins, it binds directly to 16S rRNA where it nucleates assembly of the head domain of the 30S subunit. Is located at the subunit interface close to the decoding center, probably blocks exit of the E-site tRNA. This chain is Small ribosomal subunit protein uS7, found in Clostridium perfringens (strain ATCC 13124 / DSM 756 / JCM 1290 / NCIMB 6125 / NCTC 8237 / Type A).